The following is a 279-amino-acid chain: Diaminopimelate epimerase (279 aa).

Residues N13 and N66 each contribute to the substrate site. C75 (proton donor) is an active-site residue. Substrate is bound by residues 76-77 (GN), N164, N197, and 215-216 (ER). Residue C224 is the Proton acceptor of the active site. Substrate is bound at residue 225 to 226 (GT).

It belongs to the diaminopimelate epimerase family. As to quaternary structure, homodimer.

The protein resides in the cytoplasm. It catalyses the reaction (2S,6S)-2,6-diaminopimelate = meso-2,6-diaminopimelate. It functions in the pathway amino-acid biosynthesis; L-lysine biosynthesis via DAP pathway; DL-2,6-diaminopimelate from LL-2,6-diaminopimelate: step 1/1. In terms of biological role, catalyzes the stereoinversion of LL-2,6-diaminopimelate (L,L-DAP) to meso-diaminopimelate (meso-DAP), a precursor of L-lysine and an essential component of the bacterial peptidoglycan. This Nostoc punctiforme (strain ATCC 29133 / PCC 73102) protein is Diaminopimelate epimerase.